Here is an 877-residue protein sequence, read N- to C-terminus: DNA mismatch repair protein MutS (877 aa).

Glycine 630 to serine 637 is a binding site for ATP.

This sequence belongs to the DNA mismatch repair MutS family.

Functionally, this protein is involved in the repair of mismatches in DNA. It is possible that it carries out the mismatch recognition step. This protein has a weak ATPase activity. The protein is DNA mismatch repair protein MutS of Ruegeria pomeroyi (strain ATCC 700808 / DSM 15171 / DSS-3) (Silicibacter pomeroyi).